We begin with the raw amino-acid sequence, 535 residues long: Dual specificity calcium/calmodulin-dependent 3',5'-cyclic nucleotide phosphodiesterase 1B (535 aa).

Positions 1–21 are disordered; the sequence is MELSPRSPPEMLESDCPSPLE. Phosphoserine occurs at positions 7 and 14. Calmodulin-binding regions lie at residues 27 to 47 and 117 to 140; these read SKKMWIKLRSLLRYMVKQLEN and EKPKFRSIVHAVQAGIFVERMFRR. Residues 145-502 enclose the PDEase domain; that stretch reads VGPTYSTAVH…QKWKERAASG (358 aa). Histidine 222 serves as the catalytic Proton donor. Histidine 226, histidine 262, aspartate 263, and aspartate 369 together coordinate Zn(2+). Position 263 (aspartate 263) interacts with Mg(2+). 2 disordered regions span residues 445–474 and 495–535; these read PLTDDDSKSKSQPSFQWRQPSLDVDVGDPN and WKER…GNLD. The segment covering 454 to 463 has biased composition (polar residues); sequence KSQPSFQWRQ. A phosphoserine mark is found at serine 465 and serine 513.

This sequence belongs to the cyclic nucleotide phosphodiesterase family. PDE1 subfamily. In terms of assembly, homodimer. The cofactor is Zn(2+). Requires Mg(2+) as cofactor. As to expression, expressed in brain.

The protein localises to the cytoplasm. Its subcellular location is the cytosol. It catalyses the reaction a nucleoside 3',5'-cyclic phosphate + H2O = a nucleoside 5'-phosphate + H(+). The catalysed reaction is 3',5'-cyclic GMP + H2O = GMP + H(+). The enzyme catalyses 3',5'-cyclic AMP + H2O = AMP + H(+). Its activity is regulated as follows. Type I PDE are activated by the binding of calmodulin in the presence of Ca(2+). In terms of biological role, cyclic nucleotide phosphodiesterase with a dual specificity for the second messengers cAMP and cGMP, which are key regulators of many important physiological processes. Has a preference for cGMP as a substrate. This is Dual specificity calcium/calmodulin-dependent 3',5'-cyclic nucleotide phosphodiesterase 1B from Rattus norvegicus (Rat).